The primary structure comprises 297 residues: MNLGTLVSETRNPQTMDLDALPTPELVKRFNEQDTRVAEAVKATLPDVARAVDAAVAALKSGGRIIYMGAGTSGRLGVLDASECPPTFGVPHGLVVGLIAGGPGALLKAVEGAEDSQQAGEDDLVALNLQEQDLVVGLAASGRTPYVIGGLRYARQSGCTTVAVSCNPDSPIAREANIAISPVVGPEALTGSTRLKSGTAQKMVLNMISTGAMVKFGKVYQNLMVDMKATNVKLVDRACRMVVEATGIGREEAETLLKQTDFEVKPAILMALTGLDAAAAREKLAAHQGFLRAALEH.

The SIS domain maps to 55-218; it reads AVAALKSGGR…STGAMVKFGK (164 aa). The Proton donor role is filled by glutamate 83. The active site involves glutamate 114.

Belongs to the GCKR-like family. MurNAc-6-P etherase subfamily. As to quaternary structure, homodimer.

The catalysed reaction is N-acetyl-D-muramate 6-phosphate + H2O = N-acetyl-D-glucosamine 6-phosphate + (R)-lactate. It functions in the pathway amino-sugar metabolism; 1,6-anhydro-N-acetylmuramate degradation. The protein operates within amino-sugar metabolism; N-acetylmuramate degradation. Its pathway is cell wall biogenesis; peptidoglycan recycling. Functionally, specifically catalyzes the cleavage of the D-lactyl ether substituent of MurNAc 6-phosphate, producing GlcNAc 6-phosphate and D-lactate. Together with AnmK, is also required for the utilization of anhydro-N-acetylmuramic acid (anhMurNAc) either imported from the medium or derived from its own cell wall murein, and thus plays a role in cell wall recycling. The chain is N-acetylmuramic acid 6-phosphate etherase from Salmonella dublin (strain CT_02021853).